The following is a 1778-amino-acid chain: Internalin I (1778 aa).

Residues 1–28 form the signal peptide; that stretch reads MKKKFSIVIISVLLLGYLAPFDTLLVGA. Residues 36–101 are disordered; the sequence is DTAVKTAEAD…NIKTEINTDK (66 aa). Acidic residues predominate over residues 51 to 62; sequence IESETGSDDETA. The segment covering 63–88 has biased composition (basic and acidic residues); that stretch reads EEPKEAKEAEASKETTEKEEKAKTEE. LRR repeat units follow at residues 155–179, 183–204, 205–227, 228–250, 251–272, 277–298, 299–321, 322–344, 345–367, 368–389, 390–412, 413–434, 435–456, 457–478, 479–500, 501–522, 523–544, 545–566, 567–588, 589–610, 611–632, 633–653, 657–678, 685–707, 708–729, 730–751, and 752–773; these read AISQLDLSGETGNDPTDISNIEGLQ, NLTSLNLSENNISDLAPLKDLV, NLVSLNLSSNRTLVNLSGVEDLV, NLQELNVSANKALEDISQVASLP, VLKEISAQGCNIKTLELKNPAG, ELETFYLQENDLTNLTSLAKLP, KLKNLYIKGNASLKSLETLNGAT, KLQLIDASNCTDLETLGDISGLS, ELEMIQLSGCSKLKEITSLKNLP, NLVNITADSCAIEDLGTLNNLP, KLQTLVLSDNENLTNITAITDLP, QLKTLTLDGCGITSIGTLDNLP, KLEKLDLKENQITSISEITDLP, RLSYLDVSVNNLTTIGDLKKLP, LLEWLNVSSNRLSDVSTLTNFP, SLNYINISNNVIRTVGKMTELP, SLKEFYAQNNSISDISMIHDMP, NLRKVDASNNLITNIGTFDNLP, KLQSLDVHSNRITSTSVIHDLP, SLETFNAQTNLITNIGTMDNLP, DLTYVNLSFNRIPSLAPIGDLP, NLETLIVSDNNSYLRSLGTMD, KLRILDLQNNYLNYTGTEGNLS, NLTELNLRNNVYIDDISGLSTLS, RLIYLNLDSNKIEDISALSNLT, NLQELTLENNKIENISALSDLE, and NLNKLVVSKNKIIDISPVANMV. The LRRCT domain maps to 785–872; it reads TYTLPTVLSY…SAAKVTADAE (88 aa). MucBP domains are found at residues 1510–1569, 1575–1634, and 1644–1705; these read DAAA…EQTV, AIKP…PQTI, and SKKS…SQTV. A disordered region spans residues 1716 to 1742; that stretch reads SKDDPKVKGKTNQPSSTDTKLKVDNNS. Residues 1725–1742 show a composition bias toward polar residues; the sequence is KTNQPSSTDTKLKVDNNS. The LPXTG sorting signal motif lies at 1743–1747; it reads LPATG. Residue Thr1746 is modified to Pentaglycyl murein peptidoglycan amidated threonine. The propeptide at 1747–1778 is removed by sortase; sequence GDTENMILAVLIGFNMLIVASIFLFRKPKTNQ.

Belongs to the internalin family.

It localises to the secreted. The protein resides in the cell wall. A role in virulence could not be demonstrated. The sequence is that of Internalin I (inlI) from Listeria monocytogenes serovar 1/2a (strain ATCC BAA-679 / EGD-e).